A 76-amino-acid polypeptide reads, in one-letter code: uncharacterized protein (76 aa).

Residues 18–38 traverse the membrane as a helical segment; the sequence is FISALFFFNAVCIVSDNLLII.

Its subcellular location is the cell membrane. This is an uncharacterized protein from Escherichia coli O6:H1 (strain CFT073 / ATCC 700928 / UPEC).